Here is a 206-residue protein sequence, read N- to C-terminus: Oligoribonuclease (206 aa).

Positions Leu-20–Leu-183 constitute an Exonuclease domain. The active site involves Tyr-141.

This sequence belongs to the oligoribonuclease family.

It is found in the cytoplasm. Its function is as follows. 3'-to-5' exoribonuclease specific for small oligoribonucleotides. The polypeptide is Oligoribonuclease (Burkholderia lata (strain ATCC 17760 / DSM 23089 / LMG 22485 / NCIMB 9086 / R18194 / 383)).